The sequence spans 31 residues: MFTVISYFGFLLVALAFTLVTYLGLRAIQLI.

The helical transmembrane segment at 4–24 threads the bilayer; sequence VISYFGFLLVALAFTLVTYLG.

The protein belongs to the PetL family. As to quaternary structure, the 4 large subunits of the cytochrome b6-f complex are cytochrome b6, subunit IV (17 kDa polypeptide, PetD), cytochrome f and the Rieske protein, while the 4 small subunits are PetG, PetL, PetM and PetN. The complex functions as a dimer.

It localises to the plastid. Its subcellular location is the chloroplast thylakoid membrane. Its function is as follows. Component of the cytochrome b6-f complex, which mediates electron transfer between photosystem II (PSII) and photosystem I (PSI), cyclic electron flow around PSI, and state transitions. PetL is important for photoautotrophic growth as well as for electron transfer efficiency and stability of the cytochrome b6-f complex. This Nephroselmis olivacea (Green alga) protein is Cytochrome b6-f complex subunit 6.